A 342-amino-acid polypeptide reads, in one-letter code: (+)-pulegone reductase (342 aa).

Residues 163 to 166, lysine 189, tyrosine 205, asparagine 229, 251 to 257, 281 to 283, and asparagine 331 each bind NADP(+); these read GSVG, CGMVSQY, and FVV.

The protein belongs to the NADP-dependent oxidoreductase L4BD family.

The protein resides in the cytoplasm. It carries out the reaction (2R,5R)-isomenthone + NADP(+) = (R)-pulegone + NADPH + H(+). It catalyses the reaction (1R,4S)-menthone + NADP(+) = (R)-pulegone + NADPH + H(+). It participates in secondary metabolite biosynthesis; terpenoid biosynthesis. With respect to regulation, not inhibited by (+)-menthofuran. In terms of biological role, monoterpene synthase that catalyzes the specific reduction of the 4,8-double bond of (+)-pulegone to produce both (-)-menthone and (+)-isomenthone in a 70:30 ratio. Unable to utilize either (-)-isopiperitenone or (+)-cis-isopulegone, or to catalyze the reverse reaction with (-)-menthone or (+)-isomenthone. Has an absolute requirement for NADPH. This is (+)-pulegone reductase from Mentha piperita (Peppermint).